A 184-amino-acid chain; its full sequence is ATP synthase subunit b, chloroplastic (184 aa).

Residues 27–49 (LATNPINLSVVLGVLIFFGKGVL) traverse the membrane as a helical segment.

The protein belongs to the ATPase B chain family. F-type ATPases have 2 components, F(1) - the catalytic core - and F(0) - the membrane proton channel. F(1) has five subunits: alpha(3), beta(3), gamma(1), delta(1), epsilon(1). F(0) has four main subunits: a(1), b(1), b'(1) and c(10-14). The alpha and beta chains form an alternating ring which encloses part of the gamma chain. F(1) is attached to F(0) by a central stalk formed by the gamma and epsilon chains, while a peripheral stalk is formed by the delta, b and b' chains.

The protein resides in the plastid. The protein localises to the chloroplast thylakoid membrane. Functionally, f(1)F(0) ATP synthase produces ATP from ADP in the presence of a proton or sodium gradient. F-type ATPases consist of two structural domains, F(1) containing the extramembraneous catalytic core and F(0) containing the membrane proton channel, linked together by a central stalk and a peripheral stalk. During catalysis, ATP synthesis in the catalytic domain of F(1) is coupled via a rotary mechanism of the central stalk subunits to proton translocation. In terms of biological role, component of the F(0) channel, it forms part of the peripheral stalk, linking F(1) to F(0). The polypeptide is ATP synthase subunit b, chloroplastic (Oenothera argillicola (Appalachian evening primrose)).